The primary structure comprises 569 residues: Glutamate--tRNA ligase (569 aa).

Residues 110-120 carry the 'HIGH' region motif; sequence PNPNGPPTLGS.

The protein belongs to the class-I aminoacyl-tRNA synthetase family. Glutamate--tRNA ligase type 2 subfamily.

It is found in the cytoplasm. The enzyme catalyses tRNA(Glu) + L-glutamate + ATP = L-glutamyl-tRNA(Glu) + AMP + diphosphate. In terms of biological role, catalyzes the attachment of glutamate to tRNA(Glu) in a two-step reaction: glutamate is first activated by ATP to form Glu-AMP and then transferred to the acceptor end of tRNA(Glu). The polypeptide is Glutamate--tRNA ligase (Methanococcoides burtonii (strain DSM 6242 / NBRC 107633 / OCM 468 / ACE-M)).